We begin with the raw amino-acid sequence, 884 residues long: Protein translocase subunit SecA (884 aa).

ATP contacts are provided by residues Q83, G101–T105, and D491.

The protein belongs to the SecA family.

The protein resides in the plastid. It localises to the chloroplast stroma. Its subcellular location is the chloroplast thylakoid membrane. The catalysed reaction is ATP + H2O + cellular proteinSide 1 = ADP + phosphate + cellular proteinSide 2.. Its function is as follows. Has a central role in coupling the hydrolysis of ATP to the transfer of proteins across the thylakoid membrane. The chain is Protein translocase subunit SecA from Porphyra purpurea (Red seaweed).